Reading from the N-terminus, the 506-residue chain is Exoglucanase (506 aa).

Residues 1 to 18 form the signal peptide; that stretch reads MFPRSILLALSLTAVALG. The interval 19–450 is catalytic; sequence QQVGTNMAEN…IKFGDINSTF (432 aa). Glu227 serves as the catalytic Nucleophile. Glu232 acts as the Proton donor in catalysis. A glycan (N-linked (GlcNAc...) asparagine) is linked at Asn308. A disordered region spans residues 405 to 426; it reads ASPSQPGISRGTCSRDSGKPED. The span at 406–419 shows a compositional bias: polar residues; that stretch reads SPSQPGISRGTCSR. N-linked (GlcNAc...) asparagine glycosylation occurs at Asn447. The tract at residues 449 to 472 is disordered; the sequence is TFNNNGGGGGNPSPTTTRPNSPAQ. Residues 451–473 are linker; that stretch reads NNNGGGGGNPSPTTTRPNSPAQT. Over residues 460-470 the composition is skewed to low complexity; that stretch reads PSPTTTRPNSP. Residues 470–506 enclose the CBM1 domain; it reads PAQTMWGQCGGQGWTGPTACQSPSTCHVINDFYSQCF. Intrachain disulfides connect Cys478–Cys495 and Cys489–Cys505.

Belongs to the glycosyl hydrolase 7 (cellulase C) family.

The enzyme catalyses Hydrolysis of (1-&gt;4)-beta-D-glucosidic linkages in cellulose and cellotetraose, releasing cellobiose from the non-reducing ends of the chains.. Functionally, the biological conversion of cellulose to glucose generally requires three types of hydrolytic enzymes: (1) Endoglucanases which cut internal beta-1,4-glucosidic bonds; (2) Exocellobiohydrolases that cut the disaccharide cellobiose from the non-reducing end of the cellulose polymer chain; (3) Beta-1,4-glucosidases which hydrolyze the cellobiose and other short cello-oligosaccharides to glucose. In Agaricus bisporus (White button mushroom), this protein is Exoglucanase (cel2).